A 211-amino-acid polypeptide reads, in one-letter code: Large ribosomal subunit protein uL3 (211 aa).

It belongs to the universal ribosomal protein uL3 family. Part of the 50S ribosomal subunit. Forms a cluster with proteins L14 and L19.

Its function is as follows. One of the primary rRNA binding proteins, it binds directly near the 3'-end of the 23S rRNA, where it nucleates assembly of the 50S subunit. The sequence is that of Large ribosomal subunit protein uL3 from Akkermansia muciniphila (strain ATCC BAA-835 / DSM 22959 / JCM 33894 / BCRC 81048 / CCUG 64013 / CIP 107961 / Muc).